The chain runs to 385 residues: Putative RNA methyltransferase YpsC (385 aa).

A THUMP domain is found at 44–156; the sequence is AICRANLWLR…KDQALITLDS (113 aa).

Belongs to the methyltransferase superfamily. Interacts with the RNA polymerase core.

This chain is Putative RNA methyltransferase YpsC (ypsC), found in Bacillus subtilis (strain 168).